A 785-amino-acid chain; its full sequence is Phenylalanine--tRNA ligase beta subunit (785 aa).

In terms of domain architecture, tRNA-binding spans 39 to 150; it reads RTWAAGVVVG…ASLPLGLDVG (112 aa). Residues 400-476 form the B5 domain; that stretch reads RENRVVSLRP…RVVGYDRFAP (77 aa). Positions 454, 460, 463, and 464 each coordinate Mg(2+). The FDX-ACB domain occupies 692–784; it reads SPFPPAARDL…LAERYSVDLR (93 aa).

This sequence belongs to the phenylalanyl-tRNA synthetase beta subunit family. Type 1 subfamily. As to quaternary structure, tetramer of two alpha and two beta subunits. Mg(2+) serves as cofactor.

It localises to the cytoplasm. It carries out the reaction tRNA(Phe) + L-phenylalanine + ATP = L-phenylalanyl-tRNA(Phe) + AMP + diphosphate + H(+). The polypeptide is Phenylalanine--tRNA ligase beta subunit (Gloeobacter violaceus (strain ATCC 29082 / PCC 7421)).